The chain runs to 634 residues: Probable beta-glucosidase C (634 aa).

Positions 1-19 (MRIDCTVASLTALASGCQA) are cleaved as a signal peptide. Asn90, Asn112, Asn219, and Asn270 each carry an N-linked (GlcNAc...) asparagine glycan. Asp337 is a catalytic residue. N-linked (GlcNAc...) asparagine glycans are attached at residues Asn360, Asn476, Asn484, and Asn524.

The protein belongs to the glycosyl hydrolase 3 family.

Its subcellular location is the secreted. The catalysed reaction is Hydrolysis of terminal, non-reducing beta-D-glucosyl residues with release of beta-D-glucose.. It functions in the pathway glycan metabolism; cellulose degradation. Beta-glucosidases are one of a number of cellulolytic enzymes involved in the degradation of cellulosic biomass. Catalyzes the last step releasing glucose from the inhibitory cellobiose. The protein is Probable beta-glucosidase C (bglC) of Aspergillus flavus (strain ATCC 200026 / FGSC A1120 / IAM 13836 / NRRL 3357 / JCM 12722 / SRRC 167).